Consider the following 376-residue polypeptide: Fibromodulin (376 aa).

A signal peptide spans 1–18; the sequence is MQWASILLLAGLCSLSWA. Glutamine 19 is modified (pyrrolidone carboxylic acid). Tyrosine 20, tyrosine 38, tyrosine 45, tyrosine 47, tyrosine 50, tyrosine 53, tyrosine 55, tyrosine 63, and tyrosine 65 each carry sulfotyrosine. Positions 67-105 constitute an LRRNT domain; the sequence is SPPQPEPRDCPQECDCPPNFPTAMYCDNRNLKYLPFVPS. 8 LRR repeats span residues 106-127, 130-151, 156-176, 177-198, 201-222, 224-245, 246-266, and 269-289; these read RMKY…VFDN, GLLW…KKVF, HLER…PLPR, SLRE…ALEG, NLTA…MKGL, SLIL…LPSA, LEQL…YFRG, and KLLY…ASNT. N-linked (GlcNAc...) (keratan sulfate) asparagine glycosylation occurs at asparagine 127. N-linked (GlcNAc...) (keratan sulfate) asparagine glycosylation is present at asparagine 166. Asparagine 201 carries N-linked (GlcNAc...) (keratan sulfate) asparagine glycosylation. N-linked (GlcNAc...) (keratan sulfate) asparagine glycosylation occurs at asparagine 291. LRR repeat units lie at residues 294–315 and 316–335; these read SLLE…STNL and ENLY…SFCT. Cysteine 334 and cysteine 367 are oxidised to a cystine. Residue asparagine 341 is glycosylated (N-linked (GlcNAc...) asparagine). The stretch at 344–365 is one LRR 11 repeat; sequence KLQVLRLDGNEIKRSAMPADAP.

The protein belongs to the small leucine-rich proteoglycan (SLRP) family. SLRP class II subfamily. Binds to type I and type II collagen. Post-translationally, binds keratan sulfate chains.

Its subcellular location is the secreted. It localises to the extracellular space. The protein localises to the extracellular matrix. In terms of biological role, affects the rate of fibrils formation. May have a primary role in collagen fibrillogenesis. The sequence is that of Fibromodulin (FMOD) from Bos taurus (Bovine).